A 446-amino-acid polypeptide reads, in one-letter code: Deoxyguanosinetriphosphate triphosphohydrolase-like protein (446 aa).

Residues 1–28 (MSSSVWQERRHGEDKQRRNDHRSPFQRD) form a disordered region. The segment covering 7-28 (QERRHGEDKQRRNDHRSPFQRD) has biased composition (basic and acidic residues). An HD domain is found at 59–252 (RLTHSLEVSQ…MELADDIAYA (194 aa)).

This sequence belongs to the dGTPase family. Type 2 subfamily.

This is Deoxyguanosinetriphosphate triphosphohydrolase-like protein from Shewanella sp. (strain ANA-3).